The sequence spans 280 residues: 3-methyl-2-oxobutanoate hydroxymethyltransferase (280 aa).

Positions 61 and 100 each coordinate Mg(2+). 3-methyl-2-oxobutanoate is bound by residues 61 to 62 (DS), Asp-100, and Lys-130. Glu-132 contributes to the Mg(2+) binding site. Glu-198 acts as the Proton acceptor in catalysis.

It belongs to the PanB family. As to quaternary structure, homodecamer; pentamer of dimers. Requires Mg(2+) as cofactor.

It localises to the cytoplasm. It catalyses the reaction 3-methyl-2-oxobutanoate + (6R)-5,10-methylene-5,6,7,8-tetrahydrofolate + H2O = 2-dehydropantoate + (6S)-5,6,7,8-tetrahydrofolate. It functions in the pathway cofactor biosynthesis; (R)-pantothenate biosynthesis; (R)-pantoate from 3-methyl-2-oxobutanoate: step 1/2. Functionally, catalyzes the reversible reaction in which hydroxymethyl group from 5,10-methylenetetrahydrofolate is transferred onto alpha-ketoisovalerate to form ketopantoate. This is 3-methyl-2-oxobutanoate hydroxymethyltransferase from Mycolicibacterium vanbaalenii (strain DSM 7251 / JCM 13017 / BCRC 16820 / KCTC 9966 / NRRL B-24157 / PYR-1) (Mycobacterium vanbaalenii).